A 167-amino-acid chain; its full sequence is LIM domain transcription factor LMO4.1 (167 aa).

The span at 1-17 shows a compositional bias: polar residues; that stretch reads MVNNRVTESTTTAVSSN. The tract at residues 1–20 is disordered; sequence MVNNRVTESTTTAVSSNGGP. 2 consecutive LIM zinc-binding domains span residues 22 to 84 and 86 to 148; these read KACA…LFGS and GACS…GLLS.

In terms of biological role, acts as a positive cofactor of GATA transcription factors to establish the identity of the ventral mesoderm during gastrulation. Down-regulation in the dorsal mesoderm is necessary for the proper formation of this territory since, when present, lmo4 may bind ldb1 and restrict the availability of this cofactor for Spemman organizer transcription factors. At neurula stages, suppresses primary neuron differentiation and modulates gene expression at the Isthmic Organizer of the midbrain-hindbrain boundary. The chain is LIM domain transcription factor LMO4.1 (lmo4.1) from Xenopus tropicalis (Western clawed frog).